Reading from the N-terminus, the 483-residue chain is Regulatory protein ViaA (483 aa).

The protein belongs to the ViaA family. Homodimer. Interacts with RavA.

The protein localises to the cytoplasm. In terms of biological role, component of the RavA-ViaA chaperone complex, which may act on the membrane to optimize the function of some of the respiratory chains. ViaA stimulates the ATPase activity of RavA. The chain is Regulatory protein ViaA from Escherichia coli O127:H6 (strain E2348/69 / EPEC).